The following is a 617-amino-acid chain: Thioredoxin reductase (617 aa).

Residues 127–128, 147–150, 163–164, 168–172, A237, D433, and 440–442 contribute to the FAD site; these read PG, DYVK, TC, GCVPK, and ELA. C164 and C169 are disulfide-bonded. The tract at residues 514–528 is loop important for the interaction with TRX1; it reads HRQKHIRAQKDEYDL. H585 provides a ligand contact to FAD. H585 acts as the Proton acceptor in catalysis. The cysteines at positions 611 and 616 are disulfide-linked.

It belongs to the class-I pyridine nucleotide-disulfide oxidoreductase family. Homodimer. The cofactor is FAD.

It localises to the mitochondrion. The protein localises to the cytoplasm. It catalyses the reaction [thioredoxin]-dithiol + NADP(+) = [thioredoxin]-disulfide + NADPH + H(+). Its function is as follows. Catalyzes the transfer of electrons from NADPH to thioredoxins TRX1, TRX2 and TRX3, which in turn act as reductants of disulfide containing proteins. Able to reduce nitroglutathione (GSNO), a compound involved in the transport of nitric oxide (NO); however, TRX1 is more efficient in reducing GSNO. Has no catalytic activity towards oxidized glutathione (GSSG). The sequence is that of Thioredoxin reductase from Plasmodium falciparum (isolate 3D7).